Here is a 373-residue protein sequence, read N- to C-terminus: Alpha-ketoglutarate dependent kainoid synthase (373 aa).

One can recognise a Fe2OG dioxygenase domain in the interval 204–320 (TINSKKMFFT…RSSLITFYEP (117 aa)). Fe cation-binding residues include histidine 235, aspartate 237, and histidine 296. A 2-oxoglutarate-binding site is contributed by arginine 311.

Belongs to the iron/ascorbate-dependent oxidoreductase family. Requires Fe(2+) as cofactor.

It catalyses the reaction N-(7'-carboxy-7'-demethylgeranyl)-L-glutamate + 2-oxoglutarate + O2 = isodomoate A + succinate + CO2 + H2O. It carries out the reaction N-geranyl-L-glutamate + 2-oxoglutarate + O2 = dainate A + succinate + CO2 + H2O. It functions in the pathway secondary metabolite biosynthesis. Functionally, iron/ascorbate-dependent oxidoreductase: part of the gene cluster that mediates the biosynthesis of domoic acid (DA) and derivatives, natural products with neurochemical activity acting as ionotropic glutamate receptor (iGluR) agonists, thus being neurotoxins causing amnesic shellfish poisoning (ASP). Catalyzes the conversion of 7'-N-carboxy-L-geranyl-L-glutamic acid (cNGG) to isodomoic acid-A. Also mediates the conversion of N-geranyl-L-glutamic acid (L-NGG) to dainic acid A. The chain is Alpha-ketoglutarate dependent kainoid synthase from Pseudo-nitzschia multiseries (Marine planktonic diatom).